A 413-amino-acid chain; its full sequence is Serine hydroxymethyltransferase (413 aa).

Residues Leu115 and 119–121 each bind (6S)-5,6,7,8-tetrahydrofolate; that span reads GHL. Lys224 bears the N6-(pyridoxal phosphate)lysine mark.

This sequence belongs to the SHMT family. As to quaternary structure, homodimer. Pyridoxal 5'-phosphate serves as cofactor.

Its subcellular location is the cytoplasm. It carries out the reaction (6R)-5,10-methylene-5,6,7,8-tetrahydrofolate + glycine + H2O = (6S)-5,6,7,8-tetrahydrofolate + L-serine. Its pathway is one-carbon metabolism; tetrahydrofolate interconversion. It participates in amino-acid biosynthesis; glycine biosynthesis; glycine from L-serine: step 1/1. Functionally, catalyzes the reversible interconversion of serine and glycine with tetrahydrofolate (THF) serving as the one-carbon carrier. This reaction serves as the major source of one-carbon groups required for the biosynthesis of purines, thymidylate, methionine, and other important biomolecules. Also exhibits THF-independent aldolase activity toward beta-hydroxyamino acids, producing glycine and aldehydes, via a retro-aldol mechanism. This chain is Serine hydroxymethyltransferase, found in Mycoplasma mycoides subsp. mycoides SC (strain CCUG 32753 / NCTC 10114 / PG1).